The sequence spans 367 residues: MSDSQTLVVKLGTSVLTGGSRRLNRAHIVELVRQCAQLHAAGHRIVIVTSGAIAAGREHLGYPELPATIASKQLLAAVGQSRLIQLWEQLFSIYGIHIGQMLLTRADMEDRERFLNARDTLRALLDNNIVPVINENDAVATAEIKVGDNDNLSALAAILAGADKLLLLTDQQGLFTADPRTNPQAELIKDVYGIDDALRAIAGDSVSGLGTGGMGTKLQAADVACRAGIDTIIAAGSKPGVIGDVMAGISAGTRFHAQASPLENRKRWIFGAPPAGEITVDEGATSAILERGSSLLPKGIKSVTGNFSRGEVIRIRNQEGRDIAHGVTRYNSDALRRIAGHHSQQIDAILGYEYGPVAVHRDDMITR.

Position 10 (K10) interacts with ATP. Residues S50, D137, and N149 each contribute to the substrate site. ATP-binding positions include 169–170 and 211–217; these read TD and TGGMGTK. A PUA domain is found at 275-353; it reads AGEITVDEGA…QQIDAILGYE (79 aa).

The protein belongs to the glutamate 5-kinase family.

It is found in the cytoplasm. The catalysed reaction is L-glutamate + ATP = L-glutamyl 5-phosphate + ADP. Its pathway is amino-acid biosynthesis; L-proline biosynthesis; L-glutamate 5-semialdehyde from L-glutamate: step 1/2. In terms of biological role, catalyzes the transfer of a phosphate group to glutamate to form L-glutamate 5-phosphate. In Citrobacter koseri (strain ATCC BAA-895 / CDC 4225-83 / SGSC4696), this protein is Glutamate 5-kinase.